The primary structure comprises 502 residues: Hexokinase-9 (502 aa).

A helical transmembrane segment spans residues 5–24 (AALASAAMAAAAVAVVSTVL). The region spanning 37-488 (RAEAVLLRDL…SGVGAALLAA (452 aa)) is the Hexokinase domain. The interval 92–230 (SGGEKGMFYA…GLDMKVTALV (139 aa)) is hexokinase small subdomain. The ADP site is built by glycine 106, threonine 107, and asparagine 108. D-glucose is bound by residues threonine 196, lysine 197, asparagine 231, and aspartate 232. The segment at 231–477 (NDTVGTLAAG…PSVMIKHVND (247 aa)) is hexokinase large subdomain. Residue threonine 255 coordinates ADP. D-glucose is bound by residues asparagine 258, glutamate 286, and glutamate 317. Position 442 (glycine 442) interacts with ADP.

Belongs to the hexokinase family. As to expression, expressed in roots, leaves, flowers, immature seeds, endosperm and seed coat.

It is found in the plastid. The protein localises to the chloroplast outer membrane. It catalyses the reaction a D-hexose + ATP = a D-hexose 6-phosphate + ADP + H(+). The catalysed reaction is D-fructose + ATP = D-fructose 6-phosphate + ADP + H(+). It carries out the reaction D-glucose + ATP = D-glucose 6-phosphate + ADP + H(+). It functions in the pathway carbohydrate metabolism; hexose metabolism. Its pathway is carbohydrate degradation; glycolysis; D-glyceraldehyde 3-phosphate and glycerone phosphate from D-glucose: step 1/4. In terms of biological role, fructose and glucose phosphorylating enzyme. In Oryza sativa subsp. japonica (Rice), this protein is Hexokinase-9 (HXK9).